A 753-amino-acid polypeptide reads, in one-letter code: MPILTCRYKILFLYNLRNCFTFQNQRCLIPYGTTTTIRWYNANFQAVQNNFSDYKNELISSHRPEASSLLDFLVKDQKKSGDISLHTKFNLYVDDLLKKSEKGQIKKFINDIKKDLATESQLPLSAPFKDESTRTMTDPQVLAYIHQSMPYQYASLYSVLTDLKIVNSDVSCKSQHILDCGKGPGIGALASYSVFPTPNSVSIVEENPFLKKIIYDIHHNIYPSTSPNPTSPVTLNRLPLGKKDSYTLVIASNKLLEMKSEKELFDYLRSLWSLVSNDGGLLVLCERGTKRGFSLIQRARTFLLQKSKNTSDKQFNAHIVAPCPHDGRCPIDIENGVRANICSFKQHFFLSPFSRLYVPRSHRRSSDRSHYSYVVIQKGITRPLNNTTQRFKNDEDLLENVNVTSPTLKNWPRIIRPPLKRDGHVIIDVCDSDARLRRNIVPKSQGKLAYRLARKSAWGDLFPLEGKVQSTSPSSKITKHLKDASSTYSINPPSYNKPKVERNTTADPIFVGKRFYSTNRHKAFSRFADFNSHRFPCIFTSFSCYNCISGTRNISRQYSRDKFHYNQRTTIYYLVAISIFALGLTYAAVPLYRLFCSKTGYGGTLNTDQSRMNAERMVPRKDNKRIRVTFNGDVAGNLSWKLWPQQREIYVLPGETALGFYTAENTSDHDIVGVATYNIVPGQAAVYFSKVACFCFEEQKLDAHEKVDLPVFFFIDPEFADDPNMKDIDDILLSYTFFEARYDTNGNLLTKLN.

A mitochondrion-targeting transit peptide spans 1–39 (MPILTCRYKILFLYNLRNCFTFQNQRCLIPYGTTTTIRW). [4Fe-4S] cluster-binding residues include Cys-323, Cys-329, Cys-342, and Cys-430. Residues 571-591 (IYYLVAISIFALGLTYAAVPL) traverse the membrane as a helical segment. Over 592 to 753 (YRLFCSKTGY…TNGNLLTKLN (162 aa)) the chain is Mitochondrial intermembrane.

It in the N-terminal section; belongs to the methyltransferase superfamily. Rsm22 family. The protein in the C-terminal section; belongs to the COX11/CtaG family. Associates with the mitochondrial ribosome (mitoribosome). Only transiently interacts with the mitoribosome. Specific enzymatic cleavages in vivo by mitochondrial processing peptidase (MPP) yield mature proteins including rsm22-2 and cox11-2.

Its subcellular location is the mitochondrion. The protein localises to the mitochondrion inner membrane. In terms of biological role, mitochondrial ribosome (mitoribosome) assembly factor. Binds at the interface of the head and body domains of the mitochondrial small ribosomal subunit (mt-SSU), occluding the mRNA channel and preventing compaction of the head domain towards the body. Probable inactive methyltransferase: retains the characteristic folding and ability to bind S-adenosyl-L-methionine, but it probably lost its methyltransferase activity. Functionally, exerts its effect at some terminal stage of cytochrome c oxidase synthesis, probably by being involved in the insertion of the copper B into subunit I. The protein is Rsm22-cox11 tandem protein 2, mitochondrial (cox1102) of Schizosaccharomyces pombe (strain 972 / ATCC 24843) (Fission yeast).